The following is a 659-amino-acid chain: MKLKLIFKTIYADKDKTDLFYCVSKGIIYNKIKNKIVYQLKYTEIPRYFNFNLEFESYQSNKIYQSNTNTYKNTIIGSIYNLVLYIDIHNLFCDRFRINNKVLKILCYYLIIIQIRQLKTNKSYNITKENLPFKINDIINNPIQLIPWNLFLLGKNITLDLKNIKLVTNKQIPKKKFQKTGCIFESNNIDKLTHELRKKITTKSLIIIPTGFPKLWTNCSSITYTTYIDLVQLNDNFENKFKNKKMIHNIIVHECYIQYIPIIKKLIQYFVDCKSIWIINSLPLKYYISNDNNTEGKFTIGNVFKLANIWANFSTNDKKSYKTEIIRFIMADFNKLYFKINFPTDDLPVQIISPNILELNIFNEFRKFHMDWLSKLNNDKNNIYSSTSKHKNNRIKSKIYDCVMVLSLSVINNNDITIFFKNKIQKTLDINCKISKKIEKMIDVYISARKTSHHKINEKTPVDFTKIVNSLTQKKDKINSVISNYNRYQKNGFYDSIKDNDCPVCYDDDYIKTKLICGHTVCLTCVLNILPNSKGCPLCMEPININKMAIIRESIGESNNYSEMLDLLFKNLSNETLILTNLEETHNIMLYRGFNVWLLKCSFIAKKINFLSKITTVIILSSPLNSINDSDKLDFEMFQEYIKLVNPNISIKRIQLNIY.

The segment at 502-540 (CPVCYDDDYIKTKLICGHTVCLTCVLNILPNSKGCPLCM) adopts an RING-type zinc-finger fold.

The sequence is that of Putative RING finger protein R311 from Acanthamoeba polyphaga (Amoeba).